The primary structure comprises 128 residues: Lutropin subunit beta (128 aa).

6 disulfide bridges follow: cysteine 18–cysteine 66, cysteine 32–cysteine 81, cysteine 35–cysteine 119, cysteine 43–cysteine 97, cysteine 47–cysteine 99, and cysteine 102–cysteine 109. Asparagine 22 carries an N-linked (GlcNAc...) asparagine glycan.

It belongs to the glycoprotein hormones subunit beta family. Heterodimer of a common alpha chain and a unique beta chain which confers biological specificity to thyrotropin, lutropin, follitropin and gonadotropin.

The protein resides in the secreted. In terms of biological role, promotes spermatogenesis and ovulation by stimulating the testes and ovaries to synthesize steroids. The chain is Lutropin subunit beta (LHB) from Struthio camelus (Common ostrich).